Here is a 395-residue protein sequence, read N- to C-terminus: Chorismate synthase (395 aa).

NADP(+)-binding residues include arginine 40 and arginine 46. Residues 137–139, glycine 308, 323–327, and arginine 349 contribute to the FMN site; these read RSS and KPLPT.

It belongs to the chorismate synthase family. In terms of assembly, homotetramer. Requires FMNH2 as cofactor.

It catalyses the reaction 5-O-(1-carboxyvinyl)-3-phosphoshikimate = chorismate + phosphate. It functions in the pathway metabolic intermediate biosynthesis; chorismate biosynthesis; chorismate from D-erythrose 4-phosphate and phosphoenolpyruvate: step 7/7. In terms of biological role, catalyzes the anti-1,4-elimination of the C-3 phosphate and the C-6 proR hydrogen from 5-enolpyruvylshikimate-3-phosphate (EPSP) to yield chorismate, which is the branch point compound that serves as the starting substrate for the three terminal pathways of aromatic amino acid biosynthesis. This reaction introduces a second double bond into the aromatic ring system. The polypeptide is Chorismate synthase (Gloeobacter violaceus (strain ATCC 29082 / PCC 7421)).